Consider the following 288-residue polypeptide: Alpha/beta hydrolase domain-containing protein 17B (288 aa).

Residues serine 170, aspartate 235, and histidine 264 each act as charge relay system in the active site. At serine 282 the chain carries Phosphoserine.

This sequence belongs to the AB hydrolase superfamily. ABHD17 family. Palmitoylated on cysteine residues located in a cysteine cluster at the N-terminus which promotes membrane localization. Palmitoylation is required for post-synaptic localization and for depalmitoylating activity towards DLG4/PSD95.

It localises to the cell membrane. Its subcellular location is the recycling endosome membrane. It is found in the cell projection. The protein resides in the dendritic spine. The protein localises to the postsynaptic density membrane. The enzyme catalyses S-hexadecanoyl-L-cysteinyl-[protein] + H2O = L-cysteinyl-[protein] + hexadecanoate + H(+). Inhibited by palmostatin-B. Its function is as follows. Hydrolyzes fatty acids from S-acylated cysteine residues in proteins. Has depalmitoylating activity towards DLG4/PSD95. Has depalmitoylating activity towards GAP43. Has depalmitoylating activity towards MAP6. Has depalmitoylating activity towards NRAS. This chain is Alpha/beta hydrolase domain-containing protein 17B, found in Homo sapiens (Human).